We begin with the raw amino-acid sequence, 122 residues long: Large ribosomal subunit protein uL14 (122 aa).

This sequence belongs to the universal ribosomal protein uL14 family. Part of the 50S ribosomal subunit. Forms a cluster with proteins L3 and L19. In the 70S ribosome, L14 and L19 interact and together make contacts with the 16S rRNA in bridges B5 and B8.

Binds to 23S rRNA. Forms part of two intersubunit bridges in the 70S ribosome. The chain is Large ribosomal subunit protein uL14 from Paraburkholderia phymatum (strain DSM 17167 / CIP 108236 / LMG 21445 / STM815) (Burkholderia phymatum).